The sequence spans 512 residues: Retinaldehyde dehydrogenase 3 (512 aa).

The segment at 1–22 is disordered; sequence MATTNGAVENGQPDGKPPALPR. Ala2 carries the post-translational modification N-acetylalanine. Residues Lys204, Glu207, and 257–262 contribute to the NAD(+) site; that span reads GSTEVG. Glu280 functions as the Proton acceptor in the catalytic mechanism. The active-site Nucleophile is the Cys314. NAD(+) contacts are provided by Gln361 and Glu411.

This sequence belongs to the aldehyde dehydrogenase family. As to quaternary structure, homotetramer. Detected in embryonic head (at protein level). Ventral retina.

It localises to the cytoplasm. It carries out the reaction retinal + NAD(+) + H2O = retinoate + NADH + 2 H(+). It catalyses the reaction all-trans-retinal + NAD(+) + H2O = all-trans-retinoate + NADH + 2 H(+). The catalysed reaction is all-trans-13,14-dihydroretinal + NAD(+) + H2O = all-trans-13,14-dihydroretinoate + NADH + 2 H(+). It functions in the pathway cofactor metabolism; retinol metabolism. In terms of biological role, catalyzes the NAD-dependent oxidation of aldehyde substrates, such as all-trans-retinal and all-trans-13,14-dihydroretinal, to their corresponding carboxylic acids, all-trans-retinoate and all-trans-13,14-dihydroretinoate, respectively. High specificity for all-trans-retinal as substrate, can also accept acetaldehyde as substrate in vitro but with lower affinity. Required for the biosynthesis of normal levels of retinoate in the embryonic ocular and nasal regions; a critical lipid in the embryonic development of the eye and the nasal region. The polypeptide is Retinaldehyde dehydrogenase 3 (Aldh1a3) (Mus musculus (Mouse)).